We begin with the raw amino-acid sequence, 322 residues long: tRNA-dihydrouridine(16) synthase (322 aa).

Residues 8–10 and glutamine 69 each bind FMN; that span reads PME. Cysteine 99 acts as the Proton donor in catalysis. FMN contacts are provided by residues lysine 140, 200 to 202, and 224 to 225; these read NGD and GR.

Belongs to the Dus family. DusC subfamily. Requires FMN as cofactor.

It catalyses the reaction 5,6-dihydrouridine(16) in tRNA + NADP(+) = uridine(16) in tRNA + NADPH + H(+). The catalysed reaction is 5,6-dihydrouridine(16) in tRNA + NAD(+) = uridine(16) in tRNA + NADH + H(+). Functionally, catalyzes the synthesis of 5,6-dihydrouridine (D), a modified base found in the D-loop of most tRNAs, via the reduction of the C5-C6 double bond in target uridines. Specifically modifies U16 in tRNAs. The protein is tRNA-dihydrouridine(16) synthase of Cupriavidus necator (strain ATCC 17699 / DSM 428 / KCTC 22496 / NCIMB 10442 / H16 / Stanier 337) (Ralstonia eutropha).